Consider the following 208-residue polypeptide: Ribosomal RNA large subunit methyltransferase E (208 aa).

G62, W64, D82, D98, and D123 together coordinate S-adenosyl-L-methionine. K163 serves as the catalytic Proton acceptor.

The protein belongs to the class I-like SAM-binding methyltransferase superfamily. RNA methyltransferase RlmE family.

It localises to the cytoplasm. It catalyses the reaction uridine(2552) in 23S rRNA + S-adenosyl-L-methionine = 2'-O-methyluridine(2552) in 23S rRNA + S-adenosyl-L-homocysteine + H(+). Its function is as follows. Specifically methylates the uridine in position 2552 of 23S rRNA at the 2'-O position of the ribose in the fully assembled 50S ribosomal subunit. This Actinobacillus pleuropneumoniae serotype 5b (strain L20) protein is Ribosomal RNA large subunit methyltransferase E.